The chain runs to 719 residues: Cyclin-dependent kinase 11.1 (719 aa).

3 stretches are compositionally biased toward basic and acidic residues: residues 1–20, 38–48, and 78–129; these read MSDH…ESHK, KGLESKMRESI, and KAKE…DQKV. 2 disordered regions span residues 1 to 215 and 231 to 315; these read MSDH…KDDD and EEKE…EMTE. Over residues 130-140 the composition is skewed to basic residues; that stretch reads HEHRHHHHHRK. A compositionally biased stretch (basic and acidic residues) spans 141–163; it reads HETDGHRTNRSNRDRSSERDSEK. Residues 164–174 are compositionally biased toward basic residues; the sequence is HKRHIDRHKKS. 2 stretches are compositionally biased toward basic and acidic residues: residues 191–215 and 264–274; these read HTDV…KDDD and DDTKPKSPGKA. Positions 275 to 285 are enriched in acidic residues; that stretch reads EDDDDVIEVLD. Residues 356 to 647 enclose the Protein kinase domain; sequence YECVNRVDEG…ATQALDHEWF (292 aa). Residues 362 to 370 and Lys385 contribute to the ATP site; that span reads VDEGTFGVV. The active-site Proton acceptor is the Asp484. Residues 657–689 are disordered; the sequence is EEFPTFPAKSEQNKAPPPAKQKQQENRISHVDP. Basic and acidic residues predominate over residues 678 to 689; sequence KQQENRISHVDP.

The protein belongs to the protein kinase superfamily. CMGC Ser/Thr protein kinase family. CDC2/CDKX subfamily. In terms of tissue distribution, broadly expressed in somatic and germ line cells (at protein level). Not expressed in sperm (at protein level).

The protein resides in the nucleus. The enzyme catalyses L-seryl-[protein] + ATP = O-phospho-L-seryl-[protein] + ADP + H(+). It carries out the reaction L-threonyl-[protein] + ATP = O-phospho-L-threonyl-[protein] + ADP + H(+). Functionally, probable cyclin-dependent kinase whose activity is most likely regulated by the cyclin cyl-1/Cylin-L. Important for normal oocyte and sperm development; probably required during multiple stages of gametogenesis. Plays a role in the activation of RAS-ERK signaling in the germ line. Also acts partially redundantly with cdk-11.2 to ensure embryonic viability. The protein is Cyclin-dependent kinase 11.1 of Caenorhabditis elegans.